The chain runs to 255 residues: 5-oxoprolinase subunit A (255 aa).

The protein belongs to the LamB/PxpA family. In terms of assembly, forms a complex composed of PxpA, PxpB and PxpC.

It carries out the reaction 5-oxo-L-proline + ATP + 2 H2O = L-glutamate + ADP + phosphate + H(+). In terms of biological role, catalyzes the cleavage of 5-oxoproline to form L-glutamate coupled to the hydrolysis of ATP to ADP and inorganic phosphate. The chain is 5-oxoprolinase subunit A from Thermococcus onnurineus (strain NA1).